The chain runs to 363 residues: 43 kDa protein (363 aa).

The polypeptide is 43 kDa protein (P43) (Lepidoptera (butterflies and moths)).